We begin with the raw amino-acid sequence, 913 residues long: ER degradation-enhancing alpha-mannosidase-like protein 3 (913 aa).

The first 15 residues, 1–15, serve as a signal peptide directing secretion; that stretch reads MGCPAVEARRWGDMW. Residue N104 is glycosylated (N-linked (GlcNAc...) asparagine). E132 acts as the Proton donor in catalysis. N181 carries N-linked (GlcNAc...) asparagine glycosylation. D279 is an active-site residue. E373 functions as the Proton donor in the catalytic mechanism. E391 is an active-site residue. T477 serves as a coordination point for Ca(2+). N-linked (GlcNAc...) asparagine glycosylation occurs at N497. One can recognise a PA domain in the interval 660-766; sequence LSKHLAGAQG…KEGNIILDAI (107 aa). N797 carries an N-linked (GlcNAc...) asparagine glycan. The tract at residues 823 to 895 is disordered; it reads EESPVSQPEV…NKVQPMESIL (73 aa). Residues 826–839 show a composition bias toward low complexity; it reads PVSQPEVPSSDSPS. Positions 843-866 are enriched in basic and acidic residues; that stretch reads RTSERDITPESQEHKTEETEHSPK. A Prevents secretion from ER motif is present at residues 910–913; the sequence is KDEL.

It belongs to the glycosyl hydrolase 47 family. The cofactor is Ca(2+).

The protein resides in the endoplasmic reticulum lumen. The enzyme catalyses N(4)-(alpha-D-Man-(1-&gt;2)-alpha-D-Man-(1-&gt;2)-alpha-D-Man-(1-&gt;3)-[alpha-D-Man-(1-&gt;2)-alpha-D-Man-(1-&gt;3)-[alpha-D-Man-(1-&gt;2)-alpha-D-Man-(1-&gt;6)]-alpha-D-Man-(1-&gt;6)]-beta-D-Man-(1-&gt;4)-beta-D-GlcNAc-(1-&gt;4)-beta-D-GlcNAc)-L-asparaginyl-[protein] (N-glucan mannose isomer 9A1,2,3B1,2,3) + 4 H2O = N(4)-(alpha-D-Man-(1-&gt;3)-[alpha-D-Man-(1-&gt;3)-[alpha-D-Man-(1-&gt;6)]-alpha-D-Man-(1-&gt;6)]-beta-D-Man-(1-&gt;4)-beta-D-GlcNAc-(1-&gt;4)-beta-D-GlcNAc)-L-asparaginyl-[protein] (N-glucan mannose isomer 5A1,2) + 4 beta-D-mannose. It catalyses the reaction N(4)-(alpha-D-Man-(1-&gt;2)-alpha-D-Man-(1-&gt;2)-alpha-D-Man-(1-&gt;3)-[alpha-D-Man-(1-&gt;3)-[alpha-D-Man-(1-&gt;2)-alpha-D-Man-(1-&gt;6)]-alpha-D-Man-(1-&gt;6)]-beta-D-Man-(1-&gt;4)-beta-D-GlcNAc-(1-&gt;4)-beta-D-GlcNAc)-L-asparaginyl-[protein] (N-glucan mannose isomer 8A1,2,3B1,3) + 3 H2O = N(4)-(alpha-D-Man-(1-&gt;3)-[alpha-D-Man-(1-&gt;3)-[alpha-D-Man-(1-&gt;6)]-alpha-D-Man-(1-&gt;6)]-beta-D-Man-(1-&gt;4)-beta-D-GlcNAc-(1-&gt;4)-beta-D-GlcNAc)-L-asparaginyl-[protein] (N-glucan mannose isomer 5A1,2) + 3 beta-D-mannose. The protein operates within protein modification; protein glycosylation. May be involved in endoplasmic reticulum-associated degradation (ERAD). The polypeptide is ER degradation-enhancing alpha-mannosidase-like protein 3 (edem3) (Xenopus laevis (African clawed frog)).